Reading from the N-terminus, the 137-residue chain is Protein Turandot X (137 aa).

Residues 1–24 form the signal peptide; the sequence is MKVPVFQLSCLLCLIVCLLCSVKA.

This sequence belongs to the Turandot family.

The protein localises to the secreted. Its function is as follows. A humoral factor that may play a role in stress tolerance. This is Protein Turandot X from Drosophila persimilis (Fruit fly).